A 1216-amino-acid polypeptide reads, in one-letter code: ATP-dependent helicase/nuclease subunit A (1216 aa).

Residues 26 to 488 (QKKTAEQIEA…ILLKANFRSS (463 aa)) enclose the UvrD-like helicase ATP-binding domain. 47 to 54 (ASAGSGKT) contacts ATP. The UvrD-like helicase C-terminal domain maps to 515–802 (KHQLVFANTK…ELMTIHKSKG (288 aa)).

It belongs to the helicase family. AddA subfamily. Heterodimer of AddA and AddB/RexB. Mg(2+) serves as cofactor.

The catalysed reaction is Couples ATP hydrolysis with the unwinding of duplex DNA by translocating in the 3'-5' direction.. It carries out the reaction ATP + H2O = ADP + phosphate + H(+). Functionally, the heterodimer acts as both an ATP-dependent DNA helicase and an ATP-dependent, dual-direction single-stranded exonuclease. Recognizes the chi site generating a DNA molecule suitable for the initiation of homologous recombination. The AddA nuclease domain is required for chi fragment generation; this subunit has the helicase and 3' -&gt; 5' nuclease activities. The sequence is that of ATP-dependent helicase/nuclease subunit A from Streptococcus pneumoniae (strain ATCC 700669 / Spain 23F-1).